Reading from the N-terminus, the 359-residue chain is UPF0283 membrane protein RHE_CH02332 (359 aa).

Positions 1 to 61 are disordered; sequence MSKPPSDLPR…EDPFINPDRD (61 aa). The next 2 helical transmembrane spans lie at 77-97 and 111-131; these read FGKI…GLWT and LGYA…ALVI.

This sequence belongs to the UPF0283 family.

Its subcellular location is the cell inner membrane. The chain is UPF0283 membrane protein RHE_CH02332 from Rhizobium etli (strain ATCC 51251 / DSM 11541 / JCM 21823 / NBRC 15573 / CFN 42).